The sequence spans 1839 residues: Mannuronan C5-epimerase AlgE3 (1839 aa).

PbH1 repeat units follow at residues 133-155, 157-179, 180-202, 204-226, 257-279, 280-302, 320-342, and 347-369; these read DRDVTLERVEIREMSGYGFDPHE, TINLTIRDSVAHDNGLDGFVADY, QVGGVFENNVSYNNDRHGFNIVT, TNDFVLSNNVAYGNGGAGLVVQR, THDVTLQNAEIYGNGLYGVRVYG, AQDVQLLDNQIHDNSQNGAYAEV, TTGTWLEGNVISGSANSTFGIQE, and TDYSSLYANTIDGVQNGTVRLYG. The segment covering 372–386 has biased composition (polar residues); the sequence is STVSEQPSSGQQATL. The interval 372 to 392 is disordered; it reads STVSEQPSSGQQATLEGTAGN. 9 Hemolysin-type calcium-binding repeats span residues 387 to 399, 406 to 422, 424 to 440, 538 to 550, 557 to 573, 574 to 591, 695 to 709, 714 to 730, and 732 to 748; these read EGTAGNDVLSGTG, GLAGNDRLDGGAGDDTL, GGAGRDTLTGGAGADTF, TGTEGNDNLSGTD, GYGGNDTLNGGAGNDIL, VGGAGRDTLTGGAGADVF, EGTDGNDSLQGTGAD, GLGGRDSLNGGAGDDVL, and GGAERDTLTGGTGADTF. PbH1 repeat units follow at residues 975–997, 999–1021, 1022–1044, 1046–1068, 1099–1121, 1122–1143, 1161–1183, and 1188–1210; these read DRNVTLERVEIREMSGYGFDPHE, TINLTIRDSVAHDNGLDGFVADY, LVDSVFENNVAYNNDRHGFNVVT, TYDFTLSNNVAYGNGGAGLVIQR, TNNITLQNAEIYGNGYSGVRLYG, TEDVQILNNQIHDNAQNVAYAE, TTGTWIEGNVISGSANSTYGIEE, and TDYSSLYANTIDGVQTGAVRLNG. Residues 1215–1236 are compositionally biased toward polar residues; the sequence is VSDQPGTGQQATLEGTTGNDTL. Residues 1215-1238 are disordered; that stretch reads VSDQPGTGQQATLEGTTGNDTLGG. Hemolysin-type calcium-binding repeat units lie at residues 1229–1243, 1247–1263, 1265–1281, 1398–1414, 1415–1432, 1536–1552, 1554–1571, 1670–1681, 1688–1704, and 1706–1722; these read GTTGNDTLGGSDAHE, GLDGDDRLDGGAGNDIL, GGVGRDTLTGGAGADTF, GHAGNDTLDGAGGDDIL, VGGAGSDSLTGGAGADVF, EGTAGNDSLQGTAADEV, HGGSGRDTLAGGAGADVF, GGDGNDTLSGGS, GGAGNDSLSGGAGNDIL, and GGAGRDTLSGGSGSDIF.

The protein belongs to the D-mannuronate C5-epimerase family. Ca(2+) serves as cofactor.

It localises to the secreted. It carries out the reaction [(1-&gt;4)-beta-D-mannuronosyl](n) = [alginate](n). It participates in glycan biosynthesis; alginate biosynthesis. Inhibited by zinc. Converts beta-D-mannuronic acid (M) to alpha-L-guluronic acid (G), producing a polymer with gel-forming capacity, required for the formation of the cyst coat. In Azotobacter vinelandii, this protein is Mannuronan C5-epimerase AlgE3.